A 90-amino-acid chain; its full sequence is U7-theraphotoxin-Hhn1k (90 aa).

A signal peptide spans 1–19; sequence MKTAIFTVVLALAVFAVLS. The propeptide occupies 20–50; it reads FGWEANEKALSEEFTELIHEKEAASETEARE. Cystine bridges form between C51–C65 and C58–C70.

It belongs to the neurotoxin 10 (Hwtx-1) family. 13 (Hntx-13) subfamily. As to expression, expressed by the venom gland.

The protein resides in the secreted. Its function is as follows. Ion channel inhibitor. The protein is U7-theraphotoxin-Hhn1k of Cyriopagopus hainanus (Chinese bird spider).